A 187-amino-acid chain; its full sequence is Adenine phosphoribosyltransferase (187 aa).

The protein belongs to the purine/pyrimidine phosphoribosyltransferase family. Homodimer.

The protein resides in the cytoplasm. It carries out the reaction AMP + diphosphate = 5-phospho-alpha-D-ribose 1-diphosphate + adenine. The protein operates within purine metabolism; AMP biosynthesis via salvage pathway; AMP from adenine: step 1/1. Its function is as follows. Catalyzes a salvage reaction resulting in the formation of AMP, that is energically less costly than de novo synthesis. The protein is Adenine phosphoribosyltransferase of Yersinia pestis (strain Pestoides F).